Here is a 376-residue protein sequence, read N- to C-terminus: Fibromodulin (376 aa).

The signal sequence occupies residues 1 to 18; it reads MQWTSLLLLAGLFSLSQA. Pyrrolidone carboxylic acid is present on glutamine 19. Tyrosine 20, tyrosine 38, tyrosine 39, tyrosine 45, tyrosine 47, tyrosine 53, and tyrosine 55 each carry sulfotyrosine. The LRRNT domain occupies 67–105; that stretch reads SPSPPDPRDCPQECDCPPNFPTAMYCDNRNLKYLPFVPS. LRR repeat units lie at residues 106 to 127, 130 to 151, 156 to 176, 177 to 198, 201 to 222, 224 to 245, 246 to 266, and 269 to 289; these read RMKY…VFDN, GLLW…RKVF, HLER…PLPR, SLRE…ALEG, NLTA…MRGL, SLIL…LPSA, LEQL…YFRG, and KLLY…ASNT. The N-linked (GlcNAc...) (keratan sulfate) asparagine glycan is linked to asparagine 127. Asparagine 166 carries an N-linked (GlcNAc...) (keratan sulfate) asparagine glycan. N-linked (GlcNAc...) (keratan sulfate) asparagine glycosylation is present at asparagine 201. Residue asparagine 291 is glycosylated (N-linked (GlcNAc...) (keratan sulfate) asparagine). LRR repeat units lie at residues 294-315 and 316-335; these read SLLE…NTNL and ENLY…SFCT. Cysteine 334 and cysteine 367 are joined by a disulfide. Asparagine 341 carries N-linked (GlcNAc...) asparagine glycosylation. Residues 344–365 form an LRR 11 repeat; that stretch reads KLQVLRLDGNEIKRSAMPADAP.

It belongs to the small leucine-rich proteoglycan (SLRP) family. SLRP class II subfamily. As to quaternary structure, binds to type I and type II collagen. In terms of processing, binds keratan sulfate chains.

The protein localises to the secreted. It localises to the extracellular space. The protein resides in the extracellular matrix. Affects the rate of fibrils formation. May have a primary role in collagen fibrillogenesis. The polypeptide is Fibromodulin (FMOD) (Homo sapiens (Human)).